A 1011-amino-acid chain; its full sequence is Phosphoenolpyruvate carboxylase (1011 aa).

Residues histidine 207 and lysine 658 contribute to the active site.

This sequence belongs to the PEPCase type 1 family. The cofactor is Mg(2+).

It catalyses the reaction oxaloacetate + phosphate = phosphoenolpyruvate + hydrogencarbonate. Functionally, forms oxaloacetate, a four-carbon dicarboxylic acid source for the tricarboxylic acid cycle. The polypeptide is Phosphoenolpyruvate carboxylase (ppc) (Thermosynechococcus vestitus (strain NIES-2133 / IAM M-273 / BP-1)).